A 77-amino-acid polypeptide reads, in one-letter code: Pi/alpha-stichotoxin-Hmg5b (77 aa).

Residues 1 to 21 form the signal peptide; the sequence is MDYQRLLFLFAVAMVITTTVA. Positions 22–34 are excised as a propeptide; it reads LPKDTALMDGQLQ. Cystine bridges form between Cys40/Cys73, Cys42/Cys66, and Cys56/Cys74. Met52 carries the methionine sulfoxide; partial modification.

Belongs to the sea anemone type 3 (BDS) potassium channel toxin family. Toxin occurs in two forms in the mucus, Hmg 1b-2 which is not oxidized and Hmg 1b-2 MetOx which is oxidized at Met-52.

The protein resides in the secreted. It is found in the nematocyst. The non-oxidized toxin is remarkably non-selective with activity on many different ion channels. Weakly and reversibly inhibits rat and human homomeric ASIC1 (isoform ASIC1a) (IC(50)=4.8 uM, and IC(50)=14.6 uM), and ASIC3 (IC(50)=15.9 uM). Molecular modeling interaction with ASIC1a suggests that this peptide hinders the collapse of acidic pockets and stabilizes nonconducting channels state. It activates several potassium channels including Kv1.1/KCNA1, Kv1.2/KCNA2, and drosophila Shaker IR. It moderately to potently inhibits potassium channels including Kv1.3/KCNA3, Kv1.4/KCNA4, Kv1.5/KCNA5, Kv1.6/KCNA6, Kv2.1/KCNB1, Kv4.2/KCND2, Kv7.1/KCNQ1, Kv7.2/Kv7.3 (KCNQ2/KCNQ3), Kv7.4/KCNQ4, hERG/KCNH2, and C.elegans QKT1. On sodium channels, it moderately to potently inhibits Nav1.1/SCN1A, Nav1.2/SCN2A, Nav1.3/SCN3A, Nav1.4/SCN4A, Nav1.5/SCN5A, Nav1.6/SCN8A, Nav1.7/SCN9A, Nav1.8/SCN10A, and B.germanica BgNav. It also moderately to potently inhibits Cav3.1/CACNA1G, Cav3.2/CACNA1H, and Cav3.3/CACNA1I. Significant shifts in the voltage-current relationship are observed on Kv and Nav, depending on the channel isoform, whereas the toxin does not seem to modulate the voltage-sensor domains of Cav channels, acting mainly as a pore blocker. Does not activate nicotinic acetylcholine receptors (nAChR), but potentiates ACh-elicited current of human alpha-7/CHRNA7 nAChR. Is also able to bind T.californica muscle-type nAChRs. In vivo, causes an excitatory effect in mice behavior. Also shows antihyperalgesic and analgesic activity in the acid-induced muscle pain mice model, and weak anti-inflammatory effect in models of acute local inflammation. Functionally, forms an oxidized toxin derivative (Hmg 1b-2 MetOx). Able to bind T.californica muscle-type nAChRs (alpha-1-beta-1-delta-epsilon (CHRNA1-CHRNB1-CHRND-CHRNE)). The sequence is that of Pi/alpha-stichotoxin-Hmg5b from Heteractis magnifica (Magnificent sea anemone).